The following is a 461-amino-acid chain: D-phenylhydantoinase (461 aa).

Residues His59, His61, and Lys151 each coordinate a divalent metal cation. Lys151 bears the N6-carboxylysine mark. Position 156 (Tyr156) interacts with substrate. Residues His182 and His239 each contribute to the a divalent metal cation site. Ser286 is a substrate binding site. Asp313 is a binding site for a divalent metal cation. Substrate is bound at residue Asn335.

Belongs to the metallo-dependent hydrolases superfamily. Hydantoinase/dihydropyrimidinase family. As to quaternary structure, homotetramer. It depends on a divalent metal cation as a cofactor. Post-translationally, carboxylation allows a single lysine to coordinate two divalent metal cations.

The enzyme catalyses D-5-phenylhydantoin + H2O = N-carbamoyl-D-phenylglycine + H(+). Catalyzes the stereospecific hydrolysis of the cyclic amide bond of D-hydantoin derivatives with an aromatic side chains at the 5'-position. Has no activity on dihydropyrimidines. The physiological function is unknown. The chain is D-phenylhydantoinase from Escherichia coli O17:K52:H18 (strain UMN026 / ExPEC).